A 126-amino-acid polypeptide reads, in one-letter code: Small ribosomal subunit protein uS13 (126 aa).

The interval 92 to 126 is disordered; sequence RMGLPVRGQRTRTNARTRRGGRRTVAGKKKAPAKK. Residues 100 to 126 show a composition bias toward basic residues; sequence QRTRTNARTRRGGRRTVAGKKKAPAKK.

The protein belongs to the universal ribosomal protein uS13 family. As to quaternary structure, part of the 30S ribosomal subunit. Forms a loose heterodimer with protein S19. Forms two bridges to the 50S subunit in the 70S ribosome.

Functionally, located at the top of the head of the 30S subunit, it contacts several helices of the 16S rRNA. In the 70S ribosome it contacts the 23S rRNA (bridge B1a) and protein L5 of the 50S subunit (bridge B1b), connecting the 2 subunits; these bridges are implicated in subunit movement. Contacts the tRNAs in the A and P-sites. The sequence is that of Small ribosomal subunit protein uS13 from Cyanothece sp. (strain PCC 7425 / ATCC 29141).